The chain runs to 467 residues: MRLPREIGPIHFVGIGGIGMSGIAEVLCNLGYTVQGSDASESANVNRLREKGIAISVGHKADNIAGADVLVVSTAIKRDNPELLAARAQRIPVVRRAEMLAELMRLKSCIAIAGTHGKTTTTSMVAALLDAGDVDPTVINGGIINAYGTNARLGAGDWMVVEADESDGTFLKLPADVAVVTNVDPEHLDHFKTFDAVQDAFRIFVENVPFYGFAVMCIDHPVVQALVGKIEDRRIITYGENPQADARLLDLKPSGAGSTFKVAFRDRKAGTAHEITDLMLPMPGPHNALNAVAAIAVAHELGLSDDTIRKALAAFGGVRRRFTKTGEWNGVTIIDDYGHHPVEIAAVLKAARQSTSAKVIAVVQPHRFTRLQSLFEEFCTCFNDADTVIVADVYPAGEAPIAGIDRDHFVLGLRAHGHREVIPLQDSASLAGVVAGVARSGDYVVCLGAGNITQWAYALPGELKALG.

114–120 contacts ATP; it reads GTHGKTT.

The protein belongs to the MurCDEF family.

It localises to the cytoplasm. It catalyses the reaction UDP-N-acetyl-alpha-D-muramate + L-alanine + ATP = UDP-N-acetyl-alpha-D-muramoyl-L-alanine + ADP + phosphate + H(+). Its pathway is cell wall biogenesis; peptidoglycan biosynthesis. In terms of biological role, cell wall formation. This chain is UDP-N-acetylmuramate--L-alanine ligase, found in Rhodopseudomonas palustris (strain BisB5).